The sequence spans 176 residues: Isopentenyl-diphosphate Delta-isomerase 1 (176 aa).

His23 and His30 together coordinate Mn(2+). In terms of domain architecture, Nudix hydrolase spans 28–162 (HLHRAFSCFI…EEFCTPWFKK (135 aa)). Residue Cys65 is part of the active site. Cys65 is a binding site for Mg(2+). Position 67 (His67) interacts with Mn(2+). Glu85 serves as a coordination point for Mg(2+). Mn(2+) contacts are provided by Glu112 and Glu114. The active site involves Glu114.

Belongs to the IPP isomerase type 1 family. Homodimer. It depends on Mg(2+) as a cofactor. Requires Mn(2+) as cofactor.

It is found in the cytoplasm. It catalyses the reaction isopentenyl diphosphate = dimethylallyl diphosphate. The protein operates within isoprenoid biosynthesis; dimethylallyl diphosphate biosynthesis; dimethylallyl diphosphate from isopentenyl diphosphate: step 1/1. Catalyzes the 1,3-allylic rearrangement of the homoallylic substrate isopentenyl (IPP) to its highly electrophilic allylic isomer, dimethylallyl diphosphate (DMAPP). The sequence is that of Isopentenyl-diphosphate Delta-isomerase 1 from Photorhabdus laumondii subsp. laumondii (strain DSM 15139 / CIP 105565 / TT01) (Photorhabdus luminescens subsp. laumondii).